The chain runs to 467 residues: Putative alpha-amylase (467 aa).

Catalysis depends on Glu-145, which acts as the Nucleophile.

The protein belongs to the glycosyl hydrolase 57 family.

The enzyme catalyses Endohydrolysis of (1-&gt;4)-alpha-D-glucosidic linkages in polysaccharides containing three or more (1-&gt;4)-alpha-linked D-glucose units.. The polypeptide is Putative alpha-amylase (Methanocaldococcus jannaschii (strain ATCC 43067 / DSM 2661 / JAL-1 / JCM 10045 / NBRC 100440) (Methanococcus jannaschii)).